The sequence spans 153 residues: Sec-independent protein translocase protein TatB (153 aa).

Residues 1-21 (MFGISFSELLLVGLVALLVLG) traverse the membrane as a helical segment. Residues 78 to 153 (MFAQNQHPET…HDSSLPPRAP (76 aa)) form a disordered region.

This sequence belongs to the TatB family. As to quaternary structure, the Tat system comprises two distinct complexes: a TatABC complex, containing multiple copies of TatA, TatB and TatC subunits, and a separate TatA complex, containing only TatA subunits. Substrates initially bind to the TatABC complex, which probably triggers association of the separate TatA complex to form the active translocon.

Its subcellular location is the cell inner membrane. In terms of biological role, part of the twin-arginine translocation (Tat) system that transports large folded proteins containing a characteristic twin-arginine motif in their signal peptide across membranes. Together with TatC, TatB is part of a receptor directly interacting with Tat signal peptides. TatB may form an oligomeric binding site that transiently accommodates folded Tat precursor proteins before their translocation. In Pseudomonas savastanoi pv. phaseolicola (strain 1448A / Race 6) (Pseudomonas syringae pv. phaseolicola (strain 1448A / Race 6)), this protein is Sec-independent protein translocase protein TatB.